Consider the following 142-residue polypeptide: Peptide methionine sulfoxide reductase MsrB (142 aa).

The 124-residue stretch at 3-126 folds into the MsrB domain; that stretch reads KEELKKKLSP…NSAALRFIPF (124 aa). Catalysis depends on cysteine 115, which acts as the Nucleophile.

It belongs to the MsrB Met sulfoxide reductase family.

The enzyme catalyses L-methionyl-[protein] + [thioredoxin]-disulfide + H2O = L-methionyl-(R)-S-oxide-[protein] + [thioredoxin]-dithiol. In Lactococcus lactis subsp. cremoris (strain SK11), this protein is Peptide methionine sulfoxide reductase MsrB.